Reading from the N-terminus, the 417-residue chain is Gamma-glutamyl phosphate reductase (417 aa).

This sequence belongs to the gamma-glutamyl phosphate reductase family.

Its subcellular location is the cytoplasm. It catalyses the reaction L-glutamate 5-semialdehyde + phosphate + NADP(+) = L-glutamyl 5-phosphate + NADPH + H(+). Its pathway is amino-acid biosynthesis; L-proline biosynthesis; L-glutamate 5-semialdehyde from L-glutamate: step 2/2. Its function is as follows. Catalyzes the NADPH-dependent reduction of L-glutamate 5-phosphate into L-glutamate 5-semialdehyde and phosphate. The product spontaneously undergoes cyclization to form 1-pyrroline-5-carboxylate. The chain is Gamma-glutamyl phosphate reductase from Escherichia coli (strain K12 / MC4100 / BW2952).